We begin with the raw amino-acid sequence, 322 residues long: Epiphycan (322 aa).

An N-terminal signal peptide occupies residues 1–19 (MKTLAGLVLGLVIFDAAVT). A glycan (O-linked (GalNAc...) threonine) is linked at T60. O-linked (Xyl...) (dermatan sulfate) serine glycosylation occurs at S64. The tract at residues 64-101 (SGNRELLTPPPQPEKAQEEEEEEESTPRLIDGSSPQEP) is disordered. The O-linked (GalNAc...) serine glycan is linked to S96. The 38-residue stretch at 106 to 143 (VLGPHTNEDFPTCLLCTCISTTVYCDDHELDAIPPLPK) folds into the LRRNT domain. C118 and C130 are joined by a disulfide. 5 LRR repeats span residues 144-165 (NTAY…DFAS), 168-189 (DLKR…AFRK), 192-213 (QLRE…PTTL), 238-258 (DLHH…PLPE), and 259-280 (NLRA…TFCN). C279 and C312 are joined by a disulfide. N-linked (GlcNAc...) asparagine glycans are attached at residues N283 and N302. One copy of the LRR 6 repeat lies at 290–310 (ALEDIRLDGNPINLSKTPQAY).

It belongs to the small leucine-rich proteoglycan (SLRP) family. SLRP class III subfamily. The O-linked polysaccharides on Thr-60 and Ser-96 are probably the mucin type linked to GalNAc. There is one glycosaminoglycan chain, known to be dermatan sulfate, and it is probably the O-glycosylation at Ser-64. In terms of tissue distribution, cartilage, ligament, and placenta.

It localises to the secreted. The protein localises to the extracellular space. The protein resides in the extracellular matrix. May have a role in bone formation and also in establishing the ordered structure of cartilage through matrix organization. The polypeptide is Epiphycan (EPYC) (Homo sapiens (Human)).